Here is a 575-residue protein sequence, read N- to C-terminus: Kelch repeat and BTB domain-containing protein 8 (575 aa).

A BTB domain is found at 23 to 91; the sequence is TDIVVEVDHG…AYTSRVILTE (69 aa). The region spanning 126 to 228 is the BACK domain; the sequence is SIGVFIFADH…MEDAFIEKIP (103 aa). Kelch repeat units follow at residues 310–364, 365–415, 417–455, 457–506, and 516–562; these read DIYI…YCCG, KMYA…EHKE, IYVL…VYKD, IYYI…LFQN, and QVTV…FECA.

The protein belongs to the KBTBD8 family. Component of the BCR(KBTBD8) E3 ubiquitin ligase complex, at least composed of CUL3, KBTBD8 and RBX1.

The protein resides in the cytoplasm. It is found in the cytoskeleton. Its subcellular location is the spindle. It localises to the golgi apparatus. In terms of biological role, substrate-specific adapter of a BCR (BTB-CUL3-RBX1) E3 ubiquitin ligase complex that acts as a regulator of neural crest specification. The BCR(KBTBD8) complex acts by mediating monoubiquitination of NOLC1 and TCOF1: monoubiquitination promotes the formation of a NOLC1-TCOF1 complex that acts as a platform to connect RNA polymerase I with enzymes responsible for ribosomal processing and modification, leading to remodel the translational program of differentiating cells in favor of neural crest specification. The sequence is that of Kelch repeat and BTB domain-containing protein 8 from Rattus norvegicus (Rat).